The sequence spans 3021 residues: Genome polyprotein (3021 aa).

Residue Ser-2 is modified to N-acetylserine; by host. The interaction with STAT1 stretch occupies residues 2–23 (STLPKPQRKTKRNTIRRPQDVK). The tract at residues 2–58 (STLPKPQRKTKRNTIRRPQDVKFPGGGQIVGGVYVLPRRGPRLGVRATRKTSERSQP) is interaction with EIF2AK2/PKR. The interaction with DDX3X stretch occupies residues 2–59 (STLPKPQRKTKRNTIRRPQDVKFPGGGQIVGGVYVLPRRGPRLGVRATRKTSERSQPR). The tract at residues 2 to 75 (STLPKPQRKT…PKARRSEGRS (74 aa)) is disordered. Residues 2-168 (STLPKPQRKT…EDGINFATGN (167 aa)) lie on the Cytoplasmic side of the membrane. Short sequence motifs (nuclear localization signal) lie at residues 5–13 (PKPQRKTKR) and 38–43 (PRRGPR). The segment covering 7–16 (PQRKTKRNTI) has biased composition (basic residues). Ser-53 carries the post-translational modification Phosphoserine; by host. 2 short sequence motifs (nuclear localization signal) span residues 58-64 (PRGRRQP) and 66-71 (PKARRS). Basic residues predominate over residues 58 to 68 (PRGRRQPIPKA). Ser-99 is subject to Phosphoserine; by host. The tract at residues 112 to 152 (PRRRSRNLGKVIDTLTCGFADLMGYIPLVGAPVGGVARALA) is important for endoplasmic reticulum and mitochondrial localization. Residue Ser-116 is modified to Phosphoserine; by host PKA. The interval 122–173 (VIDTLTCGFADLMGYIPLVGAPVGGVARALAHGVRALEDGINFATGNLPGCS) is interaction with APOA2. An important for lipid droplets localization region spans residues 164–167 (FATG). The helical transmembrane segment at 169 to 189 (LPGCSFSIFLLALFSCLIHPA) threads the bilayer. A propeptide spans 178-191 (LLALFSCLIHPAAS) (ER anchor for the core protein, removed in mature form by host signal peptidase). The Lumenal portion of the chain corresponds to 190–358 (ASLEWRNTSG…AGAHWGILAG (169 aa)). N-linked (GlcNAc...) asparagine; by host glycans are attached at residues Asn-196, Asn-209, and Asn-234. Positions 265–296 (LVGAATMCSALYVGDMCGAVFLVGQAFTFRPR) are important for fusion. N-linked (GlcNAc...) asparagine; by host glycosylation is present at Asn-305. The chain crosses the membrane as a helical span at residues 359–379 (LAYYSMQGNWAKVAIIMVMFS). Residues 380–731 (GVDAHTYTTG…WEFVILVFLL (352 aa)) lie on the Lumenal side of the membrane. The tract at residues 385 to 412 (TYTTGGTASRHTQAFAGLFDIGPQQKLQ) is HVR1. Asn-417, Asn-423, and Asn-430 each carry an N-linked (GlcNAc...) (high mannose) asparagine; by host glycan. Disulfide bonds link Cys-429/Cys-553, Cys-452/Cys-459, Cys-487/Cys-495, and Cys-504/Cys-509. Residue Asn-448 is glycosylated (N-linked (GlcNAc...) asparagine; by host). An HVR2 region spans residues 474–479 (DANITG). N-linked (GlcNAc...) asparagine; by host glycosylation is present at Asn-476. A CD81-binding 1 region spans residues 481-494 (SDDRPYCWHYAPRP). N-linked (GlcNAc...) asparagine; by host glycosylation is present at Asn-533. Residues 545–552 (PPSGRWFG) form a CD81-binding 2 region. Asn-557 carries N-linked (GlcNAc...) asparagine; by host glycosylation. Cys-565 and Cys-570 are disulfide-bonded. The N-linked (GlcNAc...) asparagine; by host glycan is linked to Asn-578. Disulfide bonds link Cys-587/Cys-591, Cys-603/Cys-626, and Cys-613/Cys-650. A glycan (N-linked (GlcNAc...) (high mannose) asparagine; by host) is linked at Asn-651. Cys-658 and Cys-683 are oxidised to a cystine. The tract at residues 666 to 677 (SEQHPLLHSTTE) is PKR/eIF2-alpha phosphorylation homology domain (PePHD). Residues 732–752 (LADARVCVALWLMLMISQTEA) form a helical membrane-spanning segment. Residues 753 to 763 (ALENLVTLNAV) lie on the Lumenal side of the membrane. The helical transmembrane segment at 764-784 (AAAGTHGIGWYLVAFCAAWYV) threads the bilayer. The Cytoplasmic portion of the chain corresponds to 785-787 (RGK). The helical transmembrane segment at 788-809 (LVPLVTYSLTGLWSLALLVLLL) threads the bilayer. At 810–819 (PQRAYAWSGE) the chain is on the lumenal side. The chain crosses the membrane as a helical span at residues 820 to 840 (DSATLGAGVLVLFGFFTLSPW). At 841–844 (YKHW) the chain is on the cytoplasmic side. A helical transmembrane segment spans residues 845–864 (IGRLMWWNQYTICRCESALH). At 865–887 (VWVPPLLARGSRDGVILLTSLLY) the chain is on the lumenal side. A helical membrane pass occupies residues 888–908 (PSLIFDITKLLMAVLGPLYLI). Residues 905-1032 (LYLIQATITT…DYREMGWRLL (128 aa)) form the Peptidase C18 domain. Over 909–1663 (QATITTTPYF…CMSADLEVTT (755 aa)) the chain is Cytoplasmic. A protease NS2-3 region spans residues 910-1212 (ATITTTPYFV…PVETLSTQAR (303 aa)). Cys-928 carries the S-palmitoyl cysteine; by host lipid modification. The interval 935 to 955 (IGGKYFQMIILSIGRWFNTYL) is interaction with host SCPS1. Active-site for protease NS2 activity; shared with dimeric partner residues include His-958, Glu-978, and Cys-999. A Peptidase S29 domain is found at 1033 to 1214 (APITAYAQQT…ETLSTQARSP (182 aa)). Active-site charge relay system; for serine protease NS3 activity residues include His-1089 and Asp-1113. Zn(2+) is bound by residues Cys-1129 and Cys-1131. Residue Ser-1171 is the Charge relay system; for serine protease NS3 activity of the active site. Positions 1177 and 1181 each coordinate Zn(2+). Positions 1223-1375 (PAVPQSYQVG…SNIEEVALGS (153 aa)) constitute a Helicase ATP-binding domain. 1236 to 1243 (APTGSGKS) serves as a coordination point for ATP. The Mg(2+) site is built by Ser-1243 and Glu-1323. The DECH box signature appears at 1322 to 1325 (DECH). The Helicase C-terminal domain maps to 1382–1544 (YGKAIPIALL…DLQPAETTVR (163 aa)). The segment at 1492–1504 (QRRGRTGRGRLGT) is RNA-binding. A helical membrane pass occupies residues 1664-1684 (STWVLLGGVLAALAAYCLSVG). The tract at residues 1685 to 1696 (CVVIVGHIELEG) is NS3-binding. Residues 1685-1811 (CVVIVGHIEL…SVTSPLTTNQ (127 aa)) are Cytoplasmic-facing. Residues 1812-1830 (TMFFNILGGWVATHLAGPQ) form a helical membrane-spanning segment. Residues 1831 to 1834 (SSSA) lie on the Lumenal side of the membrane. The chain crosses the membrane as a helical span at residues 1835–1855 (FVVSGLAGAAIGGIGLGRVLL). Position 1856 (Asp-1856) is a topological domain, cytoplasmic. The chain crosses the membrane as a helical span at residues 1857–1877 (ILAGYGAGVSGALVAFKIMGG). The Lumenal segment spans residues 1878–1887 (ECPTAEDMVN). The helical transmembrane segment at 1888–1908 (LLPAILSPGALVVGVICAAIL) threads the bilayer. The Cytoplasmic portion of the chain corresponds to 1909 to 1978 (RRHVGPGEGA…WINEDYPSPC (70 aa)). A lipid anchor (S-palmitoyl cysteine; by host) is attached at Cys-1978. Residues 1979–2008 (SDDWLRTIWDWVCSVLADFKAWLSAKIMPA) lie within the membrane without spanning it. Over 2009–3000 (LPGLPFISCQ…YHSVSRARTR (992 aa)) the chain is Cytoplasmic. Zn(2+) contacts are provided by Cys-2017, Cys-2035, Cys-2037, and Cys-2058. Residues 2126–2214 (EFFTEVDGVR…ASSSASQLSA (89 aa)) are FKBP8-binding. The interval 2126–2338 (EFFTEVDGVR…PVPPPRRKRT (213 aa)) is transcriptional activation. An interaction with non-structural protein 4A region spans residues 2141–2145 (PPCKP). A disordered region spans residues 2193 to 2215 (ARRLARGSPPSEASSSASQLSAP). The interaction with host SKP2 stretch occupies residues 2195–2448 (RLARGSPPSE…ALITPCSAEE (254 aa)). Ser-2200, Ser-2203, Ser-2207, Ser-2210, Ser-2213, and Ser-2216 each carry phosphoserine; by host. The span at 2200–2215 (SPPSEASSSASQLSAP) shows a compositional bias: low complexity. The tract at residues 2216–2255 (SLKATCQTHRPHPDAELVDANLLWRQEMGSNITRVESETK) is ISDR. Residues 2216 to 2281 (SLKATCQTHR…VEPSVAAECF (66 aa)) are interaction with EIF2AK2/PKR. The interval 2255-2312 (KVVVLDSFEPLRAETDDVEPSVAAECFKKPPKYPPALPIWARPDYNPPLLDRWKAPDY) is NS4B-binding. Positions 2305-2387 (DRWKAPDYVP…STTSKVPPSP (83 aa)) are V3. The short motif at 2328–2331 (PPVP) is the SH3-binding element. Positions 2333 to 2341 (PRRKRTIQL) match the Nuclear localization signal motif. A Glycyl lysine isopeptide (Lys-Gly) (interchain with G-Cter in ubiquitin) cross-link involves residue Lys-2356. The interval 2356–2417 (KSFPSSKPQE…DPDLSCDSWS (62 aa)) is disordered. Low complexity-rich tracts occupy residues 2359–2381 (PSSK…STTS) and 2388–2401 (GGES…SMPP). Ser-2459 and Ser-2472 each carry phosphoserine; by host. One can recognise a RdRp catalytic domain in the interval 2644-2762 (PLGFSYDTRC…VAESDGVDED (119 aa)). 3 residues coordinate Mg(2+): Asp-2650, Asp-2748, and Asp-2749. A helical transmembrane segment spans residues 3001-3021 (HLLLCLLLLTVGVGIFLLPAR).

It belongs to the hepacivirus polyprotein family. Homooligomer. Interacts with E1 (via C-terminus). Interacts with the non-structural protein 5A. Interacts (via N-terminus) with host STAT1 (via SH2 domain); this interaction results in decreased STAT1 phosphorylation and ubiquitin-mediated proteasome-dependent STAT1 degradation, leading to decreased IFN-stimulated gene transcription. Interacts with host STAT3; this interaction constitutively activates STAT3. Interacts with host LTBR receptor. Interacts with host TNFRSF1A receptor and possibly induces apoptosis. Interacts with host HNRPK. Interacts with host YWHAE. Interacts with host UBE3A/E6AP. Interacts with host DDX3X. Interacts with host APOA2. Interacts with host RXRA protein. Interacts with host SP110 isoform 3/Sp110b; this interaction sequesters the transcriptional corepressor SP110 away from the nucleus. Interacts with host CREB3 nuclear transcription protein; this interaction triggers cell transformation. Interacts with host ACY3. Interacts with host C1QR1. Interacts with host RBM24; this interaction, which enhances the interaction of the mature core protein with 5'-UTR, may inhibit viral translation and favor replication. Interacts with host EIF2AK2/PKR; this interaction induces the autophosphorylation of EIF2AK2. Part of the viral assembly initiation complex composed of NS2, E1, E2, NS3, NS4A, NS5A and the mature core protein. As to quaternary structure, forms a heterodimer with envelope glycoprotein E2. Interacts with mature core protein. Interacts with protease NS2. The heterodimer E1/E2 interacts with host CLDN1; this interaction plays a role in viral entry into host cell. Interacts with host SPSB2 (via C-terminus). Part of the viral assembly initiation complex composed of NS2, E1, E2, NS3, NS4A, NS5A and the mature core protein. Interacts with host NEURL3; this interaction prevents E1 binding to glycoprotein E2. In terms of assembly, forms a heterodimer with envelope glycoprotein E1. Interacts with host CD81 and SCARB1 receptors; these interactions play a role in viral entry into host cell. Interacts with host EIF2AK2/PKR; this interaction inhibits EIF2AK2 and probably allows the virus to evade the innate immune response. Interacts with host CD209/DC-SIGN and CLEC4M/DC-SIGNR. Interact with host SPCS1; this interaction is essential for viral particle assembly. Interacts with protease NS2. The heterodimer E1/E2 interacts with host CLDN1; this interaction plays a role in viral entry into host cell. Part of the viral assembly initiation complex composed of NS2, E1, E2, NS3, NS4A, NS5A and the mature core protein. Interacts with host SLC3A2/4F2hc; the interaction may facilitate viral entry into host cell. Interacts with human PLSCR1. Homohexamer. Homoheptamer. Interacts with protease NS2. As to quaternary structure, homodimer. Interacts with host SPCS1; this interaction is essential for viral particle assembly. Interacts with envelope glycoprotein E1. Interacts with envelope glycoprotein E2. Interacts with viroporin p7. Interacts with serine protease/helicase NS3. Part of the replication complex composed of NS2, NS3, NS4A, NS4B, NS5A and the RNA-directed RNA polymerase embedded in an ER-derived membranous web. Part of the viral assembly initiation complex composed of NS2, E1, E2, NS3, NS4A, NS5A and the mature core protein. In terms of assembly, interacts with protease NS2. Interacts with non-structural protein 4A; this interaction stabilizes the folding of NS3 serine protease. NS3-NS4A interaction is essential for NS3 activation and allows membrane anchorage of the latter. NS3/NS4A complex also prevents phosphorylation of host IRF3, thus preventing the establishment of dsRNA induced antiviral state. Interacts with host MAVS; this interaction leads to the cleavage and inhibition of host MAVS. Interacts with host TICAM1; this interaction leads to the cleavage and inhibition of host TICAM1. Interacts with host TANK-binding kinase/TBK1; this interaction results in the inhibition of the association between TBK1 and IRF3, which leads to the inhibition of IRF3 activation. Interacts with host RBM24. Part of the replication complex composed of NS2, NS3, NS4A, NS4B, NS5A and the RNA-directed RNA polymerase embedded in an ER-derived membranous web. Part of the viral assembly initiation complex composed of NS2, E1, E2, NS3, NS4A, NS5A and the mature core protein. Interacts with NS3 serine protease; this interaction stabilizes the folding of NS3 serine protease. NS3-NS4A interaction is essential for NS3 activation and allows membrane anchorage of the latter. Interacts with non-structural protein 5A (via N-terminus). Part of the replication complex composed of NS2, NS3, NS4A, NS4B, NS5A and the RNA-directed RNA polymerase embedded in an ER-derived membranous web. Part of the viral assembly initiation complex composed of NS2, E1, E2, NS3, NS4A, NS5A and the mature core protein. As to quaternary structure, homomultimer. Interacts with non-structural protein NS5A. Interacts with host PLA2G4C; this interaction likely initiates the recruitment of replication complexes to lipid droplets. Interacts with host STING; this interaction disrupts the interaction between STING and TBK1 thereby suppressing the interferon signaling. Part of the replication complex composed of NS2, NS3, NS4A, NS4B, NS5A and the RNA-directed RNA polymerase embedded in an ER-derived membranous web. In terms of assembly, monomer. Homodimer; dimerization is required for RNA-binding. Interacts with the mature core protein. Interacts (via N-terminus) with non-structural protein 4A. Interacts with non-structural protein 4B. Interacts (via region D2) with RNA-directed RNA polymerase. Part of the viral assembly initiation complex composed of NS2, E1, E2, NS3, NS4A, NS5A and the mature core protein. Part of the replication complex composed of NS2, NS3, NS4A, NS4B, NS5A and the RNA-directed RNA polymerase embedded in an ER-derived membranous web. Interacts with host GRB2. Interacts with host BIN1. Interacts with host PIK3R1. Interacts with host SRCAP. Interacts with host FKBP8. Interacts (via C-terminus) with host VAPB (via MSP domain). Interacts with host EIF2AK2/PKR; this interaction leads to disruption of EIF2AK2 dimerization by NS5A and probably allows the virus to evade the innate immune response. Interacts (via N-terminus) with host PACSIN2 (via N-terminus); this interaction attenuates protein kinase C alpha-mediated phosphorylation of PACSIN2 by disrupting the interaction between PACSIN2 and PRKCA. Interacts (via N-terminus) with host SRC kinase (via SH2 domain). Interacts with most Src-family kinases. Interacts with host IFI27 and SKP2; promotes the ubiquitin-mediated proteasomal degradation of NS5A. Interacts with host GPS2. Interacts with host TNFRSF21; this interaction allows the modulation by the virus of JNK, p38 MAPK, STAT3, and Akt signaling pathways in a DR6-dependent manner. Interacts (via N-terminus) with host CIDEB (via N-terminus); this interaction seems to regulate the association of HCV particles with APOE. Interacts with host CHKA/Choline Kinase-alpha; CHKA bridges host PI4KA and NS5A and potentiates NS5A-stimulated PI4KA activity, which then facilitates the targeting of the ternary complex to the ER for viral replication. Interacts with host SPSB2 (via C-terminus); this interaction targets NS5A for ubiquitination and degradation. Interacts with host RAB18; this interaction may promote the association of NS5A and other replicase components with lipid droplets. Interacts (via region D2) with host PPIA/CYPA; the interaction stimulates RNA-binding ability of NS5A and is dependent on the peptidyl-prolyl cis-trans isomerase activity of PPIA/CYPA. Interacts with host TRIM14; this interaction induces the degradation of NS5A. Homooligomer. Interacts with non-structural protein 5A. Interacts with host VAPB. Interacts with host PRK2/PKN2. Interacts with host HNRNPA1 and SEPT6; these interactions facilitate viral replication. Part of the replication complex composed of NS2, NS3, NS4A, NS4B, NS5A and the RNA-directed RNA polymerase. Zn(2+) serves as cofactor. The cofactor is Mg(2+). In terms of processing, specific enzymatic cleavages in vivo yield mature proteins. The structural proteins, core, E1, E2 and p7 are produced by proteolytic processing by host signal peptidases. The core protein precursor is synthesized as a 23 kDa, which is retained in the ER membrane through the hydrophobic signal peptide. Cleavage by the signal peptidase releases the 21 kDa mature core protein. The cleavage of the core protein precursor occurs between aminoacids 176 and 188 but the exact cleavage site is not known. Some degraded forms of the core protein appear as well during the course of infection. The other proteins (p7, NS2, NS3, NS4A, NS4B, NS5A and NS5B) are cleaved by the viral proteases. Autoprocessing between NS2 and NS3 is mediated by the NS2 cysteine protease catalytic domain and regulated by the NS3 N-terminal domain. Phosphorylated by host PKC and PKA. Post-translationally, ubiquitinated; mediated by UBE3A and leading to core protein subsequent proteasomal degradation. In terms of processing, highly N-glycosylated. Palmitoylation is required for NS2/3 autoprocessing and E2 recruitment to membranes. Post-translationally, palmitoylated. This modification may play a role in its polymerization or in protein-protein interactions. In terms of processing, phosphorylated on serines in a basal form termed p56. p58 is a hyperphosphorylated form of p56. p56 and p58 coexist in the cell in roughly equivalent amounts. Hyperphosphorylation is dependent on the presence of NS4A. Host CSNK1A1/CKI-alpha or RPS6KB1 kinases may be responsible for NS5A phosphorylation. Tyrosine phosphorylation is essential for the interaction with host SRC. Post-translationally, ubiquitinated. Ubiquitination, most probably at Lys-2350, mediated by host IFI27 and SKP2 leads to proteasomal degradation, restricting viral infection. Ubiquitination by host TRIM22 leads to interruption of viral replication. In terms of processing, the N-terminus is phosphorylated by host PRK2/PKN2.

The protein localises to the host endoplasmic reticulum membrane. The protein resides in the host mitochondrion membrane. It localises to the virion. It is found in the host cytoplasm. Its subcellular location is the host nucleus. The protein localises to the host lipid droplet. The protein resides in the virion membrane. It localises to the host mitochondrion. It is found in the host cell membrane. Its subcellular location is the host perinuclear region. It carries out the reaction Hydrolysis of four peptide bonds in the viral precursor polyprotein, commonly with Asp or Glu in the P6 position, Cys or Thr in P1 and Ser or Ala in P1'.. It catalyses the reaction a ribonucleoside 5'-triphosphate + H2O = a ribonucleoside 5'-diphosphate + phosphate + H(+). The enzyme catalyses ATP + H2O = ADP + phosphate + H(+). The catalysed reaction is RNA(n) + a ribonucleoside 5'-triphosphate = RNA(n+1) + diphosphate. With respect to regulation, inhibited by the antiviral drug hexamethylene amiloride. Inhibition by amantadine appears to be genotype-dependent. Also inhibited by long-alkyl-chain iminosugar derivatives. Activity is up-regulated by PRK2/PKN2-mediated phosphorylation. Functionally, packages viral RNA to form a viral nucleocapsid, and promotes virion budding. Participates in the viral particle production as a result of its interaction with the non-structural protein 5A. Binds RNA and may function as a RNA chaperone to induce the RNA structural rearrangements taking place during virus replication. Modulates viral translation initiation by interacting with viral IRES and 40S ribosomal subunit. Affects various cell signaling pathways, host immunity and lipid metabolism. Prevents the establishment of cellular antiviral state by blocking the interferon-alpha/beta (IFN-alpha/beta) and IFN-gamma signaling pathways and by blocking the formation of phosphorylated STAT1 and promoting ubiquitin-mediated proteasome-dependent degradation of STAT1. Activates STAT3 leading to cellular transformation. Regulates the activity of cellular genes, including c-myc and c-fos. May repress the promoter of p53, and sequester CREB3 and SP110 isoform 3/Sp110b in the cytoplasm. Represses cell cycle negative regulating factor CDKN1A, thereby interrupting an important check point of normal cell cycle regulation. Targets transcription factors involved in the regulation of inflammatory responses and in the immune response: suppresses TNF-induced NF-kappa-B activation, and activates AP-1. Binds to dendritic cells (DCs) via C1QR1, resulting in down-regulation of T-lymphocytes proliferation. Alters lipid metabolism by interacting with hepatocellular proteins involved in lipid accumulation and storage. Induces up-regulation of FAS promoter activity, and thereby contributes to the increased triglyceride accumulation in hepatocytes (steatosis). Its function is as follows. Forms a heterodimer with envelope glycoprotein E2, which mediates virus attachment to the host cell, virion internalization through clathrin-dependent endocytosis and fusion with host membrane. Fusion with the host cell is most likely mediated by both E1 and E2, through conformational rearrangements of the heterodimer required for fusion rather than a classical class II fusion mechanism. E1/E2 heterodimer binds host apolipoproteins such as APOB and ApoE thereby forming a lipo-viro-particle (LVP). APOE associated to the LVP allows the initial virus attachment to cell surface receptors such as the heparan sulfate proteoglycans (HSPGs), syndecan-1 (SDC1), syndecan-1 (SDC2), the low-density lipoprotein receptor (LDLR) and scavenger receptor class B type I (SCARB1). The cholesterol transfer activity of SCARB1 allows E2 exposure and binding of E2 to SCARB1 and the tetraspanin CD81. E1/E2 heterodimer binding on CD81 activates the epithelial growth factor receptor (EGFR) signaling pathway. Diffusion of the complex E1-E2-EGFR-SCARB1-CD81 to the cell lateral membrane allows further interaction with Claudin 1 (CLDN1) and occludin (OCLN) to finally trigger HCV entry. In terms of biological role, forms a heterodimer with envelope glycoprotein E1, which mediates virus attachment to the host cell, virion internalization through clathrin-dependent endocytosis and fusion with host membrane. Fusion with the host cell is most likely mediated by both E1 and E2, through conformational rearrangements of the heterodimer required for fusion rather than a classical class II fusion mechanism. The interaction between envelope glycoprotein E2 and host apolipoprotein E/APOE allows the proper assembly, maturation and infectivity of the viral particles. This interaction is probably promoted via the up-regulation of cellular autophagy by the virus. E1/E2 heterodimer binds host apolipoproteins such as APOB and APOE thereby forming a lipo-viro-particle (LVP). APOE associated to the LVP allows the initial virus attachment to cell surface receptors such as the heparan sulfate proteoglycans (HSPGs), syndecan-1 (SDC1), syndecan-1 (SDC2), the low-density lipoprotein receptor (LDLR) and scavenger receptor class B type I (SCARB1). The cholesterol transfer activity of SCARB1 allows E2 exposure and binding of E2 to SCARB1 and the tetraspanin CD81. E1/E2 heterodimer binding on CD81 activates the epithelial growth factor receptor (EGFR) signaling pathway. Diffusion of the complex E1-E2-EGFR-SCARB1-CD81 to the cell lateral membrane allows further interaction with Claudin 1 (CLDN1) and occludin (OCLN) to finally trigger HCV entry. Inhibits host EIF2AK2/PKR activation, preventing the establishment of an antiviral state. Viral ligand for CD209/DC-SIGN and CLEC4M/DC-SIGNR, which are respectively found on dendritic cells (DCs), and on liver sinusoidal endothelial cells and macrophage-like cells of lymph node sinuses. These interactions allow the capture of circulating HCV particles by these cells and subsequent facilitated transmission to permissive cells such as hepatocytes and lymphocyte subpopulations. The interaction between E2 and host amino acid transporter complex formed by SLC3A2 and SLC7A5/LAT1 may facilitate viral entry into host cell. Ion channel protein that acts as a viroporin and plays an essential role in the assembly, envelopment and secretion of viral particles. Regulates the host cell secretory pathway, which induces the intracellular retention of viral glycoproteins and favors assembly of viral particles. Creates a pore in acidic organelles and releases Ca(2+) and H(+) in the cytoplasm of infected cells, leading to a productive viral infection. High levels of cytoplasmic Ca(2+) may trigger membrane trafficking and transport of viral ER-associated proteins to viroplasms, sites of viral genome replication. This ionic imbalance induces the assembly of the inflammasome complex, which triggers the maturation of pro-IL-1beta into IL-1beta through the action of caspase-1. Targets also host mitochondria and induces mitochondrial depolarization. In addition of its role as a viroporin, acts as a lipid raft adhesion factor. Functionally, cysteine protease required for the proteolytic auto-cleavage between the non-structural proteins NS2 and NS3. The N-terminus of NS3 is required for the function of NS2 protease (active region NS2-3). Promotes the initiation of viral particle assembly by mediating the interaction between structural and non-structural proteins. Its function is as follows. Displays three enzymatic activities: serine protease with a chymotrypsin-like fold, NTPase and RNA helicase. NS3 serine protease, in association with NS4A, is responsible for the cleavages of NS3-NS4A, NS4A-NS4B, NS4B-NS5A and NS5A-NS5B. The NS3/NS4A complex prevents phosphorylation of host IRF3, thus preventing the establishment of dsRNA induced antiviral state. The NS3/NS4A complex induces host amino acid transporter component SLC3A2, thus contributing to HCV propagation. NS3 RNA helicase binds to RNA and unwinds both dsDNA and dsRNA in the 3' to 5' direction, and likely resolves RNA complicated stable secondary structures in the template strand. Binds a single ATP and catalyzes the unzipping of a single base pair of dsRNA. Inhibits host antiviral proteins TBK1 and IRF3 thereby preventing the establishment of an antiviral state. Cleaves host MAVS/CARDIF thereby preventing the establishment of an antiviral state. Cleaves host TICAM1/TRIF, thereby disrupting TLR3 signaling and preventing the establishment of an antiviral state. In terms of biological role, peptide cofactor which forms a non-covalent complex with the N-terminal of NS3 serine protease. The NS3/NS4A complex prevents phosphorylation of host IRF3, thus preventing the establishment of dsRNA induced antiviral state. The NS3/NS4A complex induces host amino acid transporter component SLC3A2, thus contributing to HCV propagation. Induces a specific membrane alteration that serves as a scaffold for the virus replication complex. This membrane alteration gives rise to the so-called ER-derived membranous web that contains the replication complex. NS4B self-interaction contributes to its function in membranous web formation. Promotes host TRIF protein degradation in a CASP8-dependent manner thereby inhibiting host TLR3-mediated interferon signaling. Disrupts the interaction between STING and TBK1 contributing to the inhibition of interferon signaling. Functionally, phosphorylated protein that is indispensable for viral replication and assembly. Both hypo- and hyperphosphorylated states are required for the viral life cycle. The hyperphosphorylated form of NS5A is an inhibitor of viral replication. Involved in RNA-binding and especially in binding to the viral genome. Zinc is essential for RNA-binding. Participates in the viral particle production as a result of its interaction with the mature viral core protein. Its interaction with host VAPB may target the viral replication complex to vesicles. Down-regulates viral IRES translation initiation. Mediates interferon resistance, presumably by interacting with and inhibiting host EIF2AK2/PKR. Prevents BIN1-induced apoptosis. Acts as a transcriptional activator of some host genes important for viral replication when localized in the nucleus. Via the interaction with host PACSIN2, modulates lipid droplet formation in order to promote virion assembly. Modulates TNFRSF21/DR6 signaling pathway for viral propagation. Its function is as follows. RNA-dependent RNA polymerase that performs primer-template recognition and RNA synthesis during viral replication. Initiates RNA transcription/replication at a flavin adenine dinucleotide (FAD), resulting in a 5'- FAD cap on viral RNAs. In this way, recognition of viral 5' RNA by host pattern recognition receptors can be bypassed, thereby evading activation of antiviral pathways. In Homo sapiens (Human), this protein is Genome polyprotein.